The primary structure comprises 798 residues: Phenylalanine--tRNA ligase beta subunit (798 aa).

One can recognise a tRNA-binding domain in the interval 39-147; it reads AARLAGFTLA…PSGEVGERFI (109 aa). The B5 domain occupies 404-475; that stretch reads DHSRAYKLDA…RIASLTKLVG (72 aa). The Mg(2+) site is built by aspartate 453, aspartate 459, glutamate 462, and glutamate 463. An FDX-ACB domain is found at 704 to 797; sequence RDLQAVERDF…VAKATGGTLR (94 aa).

This sequence belongs to the phenylalanyl-tRNA synthetase beta subunit family. Type 1 subfamily. Tetramer of two alpha and two beta subunits. Mg(2+) is required as a cofactor.

The protein localises to the cytoplasm. The catalysed reaction is tRNA(Phe) + L-phenylalanine + ATP = L-phenylalanyl-tRNA(Phe) + AMP + diphosphate + H(+). The sequence is that of Phenylalanine--tRNA ligase beta subunit from Ruegeria pomeroyi (strain ATCC 700808 / DSM 15171 / DSS-3) (Silicibacter pomeroyi).